A 277-amino-acid chain; its full sequence is 4-hydroxybenzoate octaprenyltransferase (277 aa).

A run of 8 helical transmembrane segments spans residues 24 to 44 (FAAA…LGVI), 81 to 101 (VEAK…DLSL), 102 to 122 (NQYA…YPFM), 129 to 149 (PQVV…GAVI), 152 to 172 (LPLT…AYDT), 201 to 221 (IIAL…WLSE), 224 to 244 (IGYF…CWLT), and 255 to 275 (AFLN…VGIY).

It belongs to the UbiA prenyltransferase family. Mg(2+) serves as cofactor.

It is found in the cell inner membrane. It catalyses the reaction all-trans-octaprenyl diphosphate + 4-hydroxybenzoate = 4-hydroxy-3-(all-trans-octaprenyl)benzoate + diphosphate. The protein operates within cofactor biosynthesis; ubiquinone biosynthesis. Its function is as follows. Catalyzes the prenylation of para-hydroxybenzoate (PHB) with an all-trans polyprenyl group. Mediates the second step in the final reaction sequence of ubiquinone-8 (UQ-8) biosynthesis, which is the condensation of the polyisoprenoid side chain with PHB, generating the first membrane-bound Q intermediate 3-octaprenyl-4-hydroxybenzoate. The chain is 4-hydroxybenzoate octaprenyltransferase from Haemophilus ducreyi (strain 35000HP / ATCC 700724).